We begin with the raw amino-acid sequence, 23 residues long: Potassium channel toxin alpha-KTx 13.1 (23 aa).

3 cysteine pairs are disulfide-bonded: Cys2–Cys15, Cys5–Cys20, and Cys9–Cys22. The interaction with Ca(2+)-activated K(+) channels stretch occupies residues 13 to 20; sequence GKCINGRC.

Expressed by the venom gland.

It is found in the secreted. Blocks reversibly Shaker B potassium channels. Also displaces binding of noxiustoxin to mouse brain synaptosome membranes. The polypeptide is Potassium channel toxin alpha-KTx 13.1 (Tityus obscurus (Amazonian scorpion)).